The sequence spans 391 residues: Large ribosomal subunit protein uL3 (391 aa).

Residues 1–10 (MSHRKFEAPR) show a composition bias toward basic and acidic residues. The interval 1-41 (MSHRKFEAPRHGSLGFRPRRRTRHHRGRCRSFPKDDPSKKP) is disordered. Over residues 17–31 (RPRRRTRHHRGRCRS) the composition is skewed to basic residues.

The protein belongs to the universal ribosomal protein uL3 family.

Its subcellular location is the cytoplasm. The L3 protein is a component of the large subunit of cytoplasmic ribosomes. The chain is Large ribosomal subunit protein uL3 (RPL3) from Tetrahymena thermophila.